A 165-amino-acid polypeptide reads, in one-letter code: Basic transcription factor 3 (165 aa).

Residues 33 to 97 (TTDDKRLQST…PQTKKLQDIL (65 aa)) enclose the NAC-A/B domain. Residues 120-134 (QKQASGEGNAASATI) are compositionally biased toward polar residues. Residues 120-144 (QKQASGEGNAASATIQEEDDDDVPE) are disordered.

Belongs to the NAC-beta family. As to quaternary structure, part of the nascent polypeptide-associated complex (NAC). Interacts with EIF(ISO)4E.

The polypeptide is Basic transcription factor 3 (Arabidopsis thaliana (Mouse-ear cress)).